Consider the following 635-residue polypeptide: Phosphatidylserine decarboxylase proenzyme 2 (635 aa).

A C2 domain is found at 20–146; sequence KLQKFRIHRR…VVQEPESTCK (127 aa). EF-hand domains are found at residues 174–209 and 210–245; these read TERR…FGNL and VAAN…QQEQ. Ca(2+) is bound by residues aspartate 187, asparagine 189, aspartate 191, glutamine 193, glutamate 198, aspartate 223, asparagine 225, aspartate 227, and glutamate 234. Residues aspartate 443, histidine 499, and serine 587 each act as charge relay system; for autoendoproteolytic cleavage activity in the active site. Residue serine 587 is the Schiff-base intermediate with substrate; via pyruvic acid; for decarboxylase activity of the active site. Residue serine 587 is modified to Pyruvic acid (Ser); by autocatalysis.

The protein belongs to the phosphatidylserine decarboxylase family. PSD-B subfamily. Eukaryotic type II sub-subfamily. As to quaternary structure, heterodimer of a large membrane-associated beta subunit and a small pyruvoyl-containing alpha subunit. The cofactor is pyruvate. Post-translationally, is synthesized initially as an inactive proenzyme. Formation of the active enzyme involves a self-maturation process in which the active site pyruvoyl group is generated from an internal serine residue via an autocatalytic post-translational modification. Two non-identical subunits are generated from the proenzyme in this reaction, and the pyruvate is formed at the N-terminus of the alpha chain, which is derived from the carboxyl end of the proenzyme. The autoendoproteolytic cleavage occurs by a canonical serine protease mechanism, in which the side chain hydroxyl group of the serine supplies its oxygen atom to form the C-terminus of the beta chain, while the remainder of the serine residue undergoes an oxidative deamination to produce ammonia and the pyruvoyl prosthetic group on the alpha chain. During this reaction, the Ser that is part of the protease active site of the proenzyme becomes the pyruvoyl prosthetic group, which constitutes an essential element of the active site of the mature decarboxylase. As to expression, highly expressed in flowers and at lower levels in leaves.

Its subcellular location is the vacuole membrane. The catalysed reaction is a 1,2-diacyl-sn-glycero-3-phospho-L-serine + H(+) = a 1,2-diacyl-sn-glycero-3-phosphoethanolamine + CO2. It functions in the pathway phospholipid metabolism; phosphatidylethanolamine biosynthesis; phosphatidylethanolamine from CDP-diacylglycerol: step 2/2. Functionally, catalyzes the formation of phosphatidylethanolamine (PtdEtn) from phosphatidylserine (PtdSer). Plays a central role in phospholipid metabolism and in the interorganelle trafficking of phosphatidylserine. Contributes only to a minor proportion of PtdEtn production. In Arabidopsis thaliana (Mouse-ear cress), this protein is Phosphatidylserine decarboxylase proenzyme 2 (PSD2).